Reading from the N-terminus, the 508-residue chain is Phenylalanine--tRNA ligase alpha subunit (508 aa).

The residue at position 2 (alanine 2) is an N-acetylalanine. The residue at position 190 (threonine 190) is a Phosphothreonine. Residues serine 193 and serine 301 each carry the phosphoserine modification. Lysine 311 is modified (N6-acetyllysine). Residues threonine 329, 372–374 (QIE), and tyrosine 412 contribute to the L-phenylalanine site. Glutamate 414 serves as a coordination point for Mg(2+). An L-phenylalanine-binding site is contributed by phenylalanine 438.

This sequence belongs to the class-II aminoacyl-tRNA synthetase family. Phe-tRNA synthetase alpha subunit type 2 subfamily. Heterotetramer; dimer of two heterodimers formed by FARSA and FARSB. It depends on Mg(2+) as a cofactor.

The protein resides in the cytoplasm. The catalysed reaction is tRNA(Phe) + L-phenylalanine + ATP = L-phenylalanyl-tRNA(Phe) + AMP + diphosphate + H(+). This is Phenylalanine--tRNA ligase alpha subunit (FARSA) from Pongo abelii (Sumatran orangutan).